Consider the following 106-residue polypeptide: Synaptic plasticity regulator PANTS (106 aa).

The interval 67 to 106 is disordered; the sequence is LQQSEKTRLEGKQNNSPVWTLRKNPPPDWYLPLDPGKPRQ.

This sequence belongs to the UPF0545 family. Post-translationally, rapidly degraded by proteolysis following neuronal stimulation, resulting in increased AMPA receptor clustering.

The protein localises to the synapse. It is found in the synaptic cleft. Negatively regulates long-term potentiation and modulates adult synaptic plasticity. This Xenopus laevis (African clawed frog) protein is Synaptic plasticity regulator PANTS.